The chain runs to 169 residues: Nucleoside diphosphate kinase 3 (169 aa).

Positions 29, 105, 111, 122, 129, and 132 each coordinate ADP. H135 serves as the catalytic Pros-phosphohistidine intermediate.

The protein belongs to the NDK family. Homohexamer. Interacts (via its N-terminal region) with KAT5; this interaction enables recruitment of NME3 at DNA damage sites where it plays a role in the repair of DNA. Found in association with several ciliary nephronophthisis proteins, including NEK8, CEP164, ANKS6. It depends on Mg(2+) as a cofactor.

The protein resides in the mitochondrion outer membrane. Its subcellular location is the cytoplasm. It localises to the cytoskeleton. The protein localises to the cilium basal body. It catalyses the reaction a 2'-deoxyribonucleoside 5'-diphosphate + ATP = a 2'-deoxyribonucleoside 5'-triphosphate + ADP. It carries out the reaction a ribonucleoside 5'-diphosphate + ATP = a ribonucleoside 5'-triphosphate + ADP. In terms of biological role, catalyzes the phosphorylation of ribonucleosides and deoxyribonucleoside diphosphates, other than ATP, into the corresponding triphosphates with ATP as the major phosphate donor. The ATP gamma phosphate is transferred to the nucleoside diphosphate beta phosphate via a ping-pong mechanism, using a phosphorylated active-site intermediate. Through the catalyzed exchange of gamma-phosphate between di- and triphosphonucleosides participates in regulation of intracellular nucleotide homeostasis. Inhibits granulocyte differentiation. May be required for ciliary function during renal development. Independently of its kinase activity, facilitates mitochondrial tethering prior to membrane fusion through its direct membrane-binding and hexamerization. Implicated in repair of both single- and double-stranded breaks in DNA through its association with the ribonucleotide reductase complex (RNR complex) via its interaction with the histone acetyltransferase KAT5, this interaction enables recruitment of NME3 at DNA damage sites where it plays a role in the repair of DNA, independently of its kinase activity. This Homo sapiens (Human) protein is Nucleoside diphosphate kinase 3.